Reading from the N-terminus, the 182-residue chain is Large ribosomal subunit protein uL6 (182 aa).

It belongs to the universal ribosomal protein uL6 family. As to quaternary structure, part of the 50S ribosomal subunit.

In terms of biological role, this protein binds to the 23S rRNA, and is important in its secondary structure. It is located near the subunit interface in the base of the L7/L12 stalk, and near the tRNA binding site of the peptidyltransferase center. In Methanococcus maripaludis (strain C6 / ATCC BAA-1332), this protein is Large ribosomal subunit protein uL6.